Consider the following 274-residue polypeptide: Orotidine 5'-phosphate decarboxylase (274 aa).

Catalysis depends on K95, which acts as the Proton donor.

It belongs to the OMP decarboxylase family. Type 2 subfamily.

It carries out the reaction orotidine 5'-phosphate + H(+) = UMP + CO2. The protein operates within pyrimidine metabolism; UMP biosynthesis via de novo pathway; UMP from orotate: step 2/2. The chain is Orotidine 5'-phosphate decarboxylase from Variovorax paradoxus (strain S110).